The chain runs to 131 residues: Cuticle protein 79, isoform A (131 aa).

3 tandem repeats follow at residues alanine 37–alanine 40, alanine 45–alanine 48, and alanine 53–alanine 56.

Its function is as follows. Component of the cuticle of migratory locust which contains more than 100 different structural proteins. This chain is Cuticle protein 79, isoform A, found in Locusta migratoria (Migratory locust).